A 239-amino-acid polypeptide reads, in one-letter code: Protein canopy homolog 4 (239 aa).

A signal peptide spans 1–20 (MGPVRLGTLLFILTVYGAWA). Disulfide bonds link Cys-37/Cys-195, Cys-40/Cys-183, and Cys-93/Cys-155. Residues 199-239 (TWTGKEKITDGQEKTEEEEQDQEEEEMTNTPVHSQHDPEDL) are disordered. A compositionally biased stretch (basic and acidic residues) spans 201–212 (TGKEKITDGQEK). Acidic residues predominate over residues 213–225 (TEEEEQDQEEEEM).

The protein belongs to the canopy family. Interacts with TLR4.

It is found in the secreted. Functionally, plays a role in the regulation of the cell surface expression of TLR4. The sequence is that of Protein canopy homolog 4 (CNPY4) from Bos taurus (Bovine).